Reading from the N-terminus, the 186-residue chain is Peptidyl-tRNA hydrolase (186 aa).

Tyrosine 14 contributes to the tRNA binding site. Histidine 19 (proton acceptor) is an active-site residue. Positions 64, 66, and 112 each coordinate tRNA.

Belongs to the PTH family. In terms of assembly, monomer.

It is found in the cytoplasm. The enzyme catalyses an N-acyl-L-alpha-aminoacyl-tRNA + H2O = an N-acyl-L-amino acid + a tRNA + H(+). Hydrolyzes ribosome-free peptidyl-tRNAs (with 1 or more amino acids incorporated), which drop off the ribosome during protein synthesis, or as a result of ribosome stalling. Its function is as follows. Catalyzes the release of premature peptidyl moieties from peptidyl-tRNA molecules trapped in stalled 50S ribosomal subunits, and thus maintains levels of free tRNAs and 50S ribosomes. This chain is Peptidyl-tRNA hydrolase, found in Geobacillus kaustophilus (strain HTA426).